Here is a 762-residue protein sequence, read N- to C-terminus: 5-methyltetrahydropteroyltriglutamate--homocysteine methyltransferase (762 aa).

Residues 17 to 20 and Lys-111 each bind 5-methyltetrahydropteroyltri-L-glutamate; that span reads REWK. L-homocysteine contacts are provided by residues 435–437 and Glu-488; that span reads IGS. L-methionine is bound by residues 435 to 437 and Glu-488; that span reads IGS. 5-methyltetrahydropteroyltri-L-glutamate is bound by residues 519 to 520 and Trp-565; that span reads RC. Asp-603 contributes to the L-homocysteine binding site. Asp-603 contacts L-methionine. Glu-609 contacts 5-methyltetrahydropteroyltri-L-glutamate. Zn(2+) is bound by residues His-645, Cys-647, and Glu-669. His-698 acts as the Proton donor in catalysis. Cys-730 serves as a coordination point for Zn(2+).

It belongs to the vitamin-B12 independent methionine synthase family. Zn(2+) is required as a cofactor.

The catalysed reaction is 5-methyltetrahydropteroyltri-L-glutamate + L-homocysteine = tetrahydropteroyltri-L-glutamate + L-methionine. It functions in the pathway amino-acid biosynthesis; L-methionine biosynthesis via de novo pathway; L-methionine from L-homocysteine (MetE route): step 1/1. In terms of biological role, catalyzes the transfer of a methyl group from 5-methyltetrahydrofolate to homocysteine resulting in methionine formation. The protein is 5-methyltetrahydropteroyltriglutamate--homocysteine methyltransferase of Bacillus cereus (strain AH187).